The chain runs to 290 residues: MHPINVRRDPSIPIYGLRQSILLNTRLQDCYVDSPALTNIWMARTCAKQNINAPAPATTSSWEVVRNPLIASSFSLVKLVLRRQLKNKCCPPPCKFGEGKLSKRLKHKDDSVMKATQQARKRNFISSKSKQPAGHRRPAGGIRESKESSKEKKLTVRQDLEDRYAEHVAATQALPQDSGTAAWKGRVLLPETQKRQQLSEDTLTIHGLPTEGYQALYHAVVEPMLWNPSGTPKRYSLELGKAIKQKLWEALCSQGAISEGAQRDRFPGRKQPGVHEEPVLKKWPKLKSKK.

Disordered stretches follow at residues 105–156 (LKHK…KLTV) and 259–290 (EGAQRDRFPGRKQPGVHEEPVLKKWPKLKSKK). Residues 114-130 (KATQQARKRNFISSKSK) show a composition bias toward polar residues. Composition is skewed to basic and acidic residues over residues 143-156 (RESKESSKEKKLTV) and 261-280 (AQRDRFPGRKQPGVHEEPVL).

This is an uncharacterized protein from Homo sapiens (Human).